The sequence spans 32 residues: SLGGFLKGVGKALAGVGKMVADQFGNLLQAGQ.

Gln-32 is subject to Glutamine amide.

As to expression, expressed by the skin glands.

It is found in the secreted. Its function is as follows. Antimicrobial peptide. In Phasmahyla jandaia (Jandaia leaf frog), this protein is Dermatoxin-J2.